The chain runs to 362 residues: MRLPELRQRLRDHGAAPCHAGRVLRAWVAGRPLDNRRQRAEDFLPLRLRNALPGLFDELRNLAQVHSEHPGEDGSARLLVRLADGQTVESVLLPRDGVCVSTQVGCAVGCVFCMTGRAGLLRQLSGAEIVAQVVLARSRRPVRKVVFMGMGEPAHNLDNVLDAIELLGLEGGIGHKNLVFSTVGDRRVFERLPQSTVKPARALSLHTTDRALRRRLLPRAPDIAPQELVELGEAYARRTGYPIQYQWTLLEGINDTEAELEGIARLLAGRYAVMNLIPYNATEADGFNRPSWARAAEMARRLHRRGVLAKLRHSAGQDVDGGCGQLRARALDAAPVLARRPLPSAETPAASPKAAASIGFPG.

E89 functions as the Proton acceptor in the catalytic mechanism. A Radical SAM core domain is found at 92 to 318 (LLPRDGVCVS…AKLRHSAGQD (227 aa)). The cysteines at positions 99 and 323 are disulfide-linked. Residues C106, C110, and C113 each contribute to the [4Fe-4S] cluster site. Residues 151-152 (GE), S181, 204-206 (SLH), and N280 each bind S-adenosyl-L-methionine. C323 acts as the S-methylcysteine intermediate in catalysis. The tract at residues 342–362 (LPSAETPAASPKAAASIGFPG) is disordered. A compositionally biased stretch (low complexity) spans 343–362 (PSAETPAASPKAAASIGFPG).

This sequence belongs to the radical SAM superfamily. RlmN family. [4Fe-4S] cluster serves as cofactor.

The protein resides in the cytoplasm. This Thiobacillus denitrificans (strain ATCC 25259 / T1) protein is Probable RNA methyltransferase Tbd_1951.